Reading from the N-terminus, the 576-residue chain is Boron transporter 1 (576 aa).

The Cytoplasmic segment spans residues 1–84; it reads MSNESTRVTV…SDWVDAFNYR (84 aa). The disordered stretch occupies residues 19 to 48; that stretch reads ECAQALERTNDELDRESSVSESRSDEESHE. Over residues 26-48 the composition is skewed to basic and acidic residues; that stretch reads RTNDELDRESSVSESRSDEESHE. The helical transmembrane segment at 85 to 105 threads the bilayer; the sequence is VIPSIVDTYFNNLLPAIAFAQ. Topologically, residues 106-116 are extracellular; the sequence is DMFDRTDNSYG. The chain crosses the membrane as a helical span at residues 117 to 134; the sequence is VNEVLLSSAMAGIVFGVL. Topologically, residues 135-140 are cytoplasmic; that stretch reads GGQPLC. A helical membrane pass occupies residues 141-160; sequence IVGVTGPISIFNYTVYEIIK. The Extracellular portion of the chain corresponds to 161–165; the sequence is PLNTS. A helical membrane pass occupies residues 166-186; it reads YFGFMFWICMWSMIFHLVLAF. The Cytoplasmic segment spans residues 187-192; sequence TNAVCL. A helical membrane pass occupies residues 193–213; that stretch reads LQYVTTFPCDIFGLFINVVYI. The Extracellular portion of the chain corresponds to 214-235; that stretch reads QKGIQILTRQFSAKSGEKSVQD. Residues 236 to 256 traverse the membrane as a helical segment; it reads GFASVVVALVMTAFGLFFKLF. The Cytoplasmic portion of the chain corresponds to 257–274; the sequence is HYYPLFSHRIRTFISDYS. Residues 275-295 form a helical membrane-spanning segment; that stretch reads TALSVLFWSSFTHFGGYLHDV. The Extracellular segment spans residues 296-329; the sequence is KFKKLPITKAFFPTSKVNRPQNTWLAYEPIPVKD. A helical transmembrane segment spans residues 330-350; that stretch reads VFIALPFGIFLTILFYFDHNV. The Cytoplasmic portion of the chain corresponds to 351-373; the sequence is SSLMAQRHQYKLKKPSSFHYDFA. A helical transmembrane segment spans residues 374 to 394; that stretch reads LLGLTTCISGVLGIPAPNGLI. The Extracellular segment spans residues 395–438; sequence PQAPLHTETLLVRDSNQKVISCVEQRFTNTFQGLMILGTMTRPL. A helical transmembrane segment spans residues 439 to 459; it reads LVCLGEIPQAVLSGLFFIMGI. The Cytoplasmic portion of the chain corresponds to 460–495; the sequence is NGLMTNSIIQRLVFLFSDPNRRDNTSPLMKVSKKSM. A helical membrane pass occupies residues 496–516; that stretch reads LIFLSFSLTGFAGEFAITNTI. The Extracellular portion of the chain corresponds to 517 to 518; that stretch reads AA. A helical membrane pass occupies residues 519-539; sequence IGFPLVLLLSVLVSFSFAYIF. The Cytoplasmic segment spans residues 540 to 576; the sequence is PTEELKILDTNVAQKFTIKNLLLENIRDAKFCDKHED.

Belongs to the anion exchanger (TC 2.A.31) family.

It localises to the cell membrane. It is found in the vacuole membrane. Functions in boric acid/borate export across the plasma membrane, and thereby protects yeast cells from boron toxicity. Involved in the trafficking of proteins to the vacuole. This chain is Boron transporter 1 (BOR1), found in Saccharomyces cerevisiae (strain ATCC 204508 / S288c) (Baker's yeast).